The primary structure comprises 291 residues: Bifunctional protein FolD (291 aa).

Residues 168–170 (GRG), Thr-195, and Val-236 contribute to the NADP(+) site.

This sequence belongs to the tetrahydrofolate dehydrogenase/cyclohydrolase family. Homodimer.

It carries out the reaction (6R)-5,10-methylene-5,6,7,8-tetrahydrofolate + NADP(+) = (6R)-5,10-methenyltetrahydrofolate + NADPH. The catalysed reaction is (6R)-5,10-methenyltetrahydrofolate + H2O = (6R)-10-formyltetrahydrofolate + H(+). Its pathway is one-carbon metabolism; tetrahydrofolate interconversion. Catalyzes the oxidation of 5,10-methylenetetrahydrofolate to 5,10-methenyltetrahydrofolate and then the hydrolysis of 5,10-methenyltetrahydrofolate to 10-formyltetrahydrofolate. In Bifidobacterium adolescentis (strain ATCC 15703 / DSM 20083 / NCTC 11814 / E194a), this protein is Bifunctional protein FolD.